The primary structure comprises 553 residues: Chaperonin GroEL 1 (553 aa).

ATP-binding positions include 29-32 (TIGP), 86-90 (DGTTT), Gly-413, 476-478 (NAL), and Asp-492. The tract at residues 521-542 (KPEPPAAPAPGGDPMGGMGGMG) is disordered. Gly residues predominate over residues 533-542 (DPMGGMGGMG).

The protein belongs to the chaperonin (HSP60) family. Forms a cylinder of 14 subunits composed of two heptameric rings stacked back-to-back. Interacts with the co-chaperonin GroES.

Its subcellular location is the cytoplasm. It carries out the reaction ATP + H2O + a folded polypeptide = ADP + phosphate + an unfolded polypeptide.. Together with its co-chaperonin GroES, plays an essential role in assisting protein folding. The GroEL-GroES system forms a nano-cage that allows encapsulation of the non-native substrate proteins and provides a physical environment optimized to promote and accelerate protein folding. The chain is Chaperonin GroEL 1 from Synechococcus sp. (strain WH7803).